A 382-amino-acid chain; its full sequence is Beta-lactamase CMY-1 (382 aa).

The N-terminal stretch at 1-23 is a signal peptide; sequence MQQRQSILWGAVATLMWAGLAHA. The active-site Acyl-ester intermediate is serine 88. Residues serine 88, glutamine 144, tyrosine 174, asparagine 176, and asparagine 363 each coordinate a beta-lactam.

Belongs to the class-C beta-lactamase family.

It catalyses the reaction a beta-lactam + H2O = a substituted beta-amino acid. Inhibited by the beta-lactamase-blocking agent sulbactam. Its function is as follows. Class C beta-lactamase which confers resistance to penicillins and cephalosporins. Has benzylpenicillin- and cefalotin-hydrolyzing activities. Has weak cefuroxime, cefotaxime, cefoxitin, imipenem and oxacillin-hydrolyzing activities. The polypeptide is Beta-lactamase CMY-1 (Klebsiella pneumoniae).